Reading from the N-terminus, the 368-residue chain is uncharacterized protein (368 aa).

The Response regulatory domain maps to 3–120; that stretch reads KILLADDERI…QIISSLEEII (118 aa). Asp55 is modified (4-aspartylphosphate). The HTH araC/xylS-type domain maps to 259–361; sequence SKMIRLIADE…GLTPSEFRRK (103 aa). 2 consecutive DNA-binding regions (H-T-H motif) follow at residues 278–299 and 327–351; these read WAAK…KQET and VSEI…KKYT.

In terms of processing, phosphorylated by YesM.

Its subcellular location is the cytoplasm. In terms of biological role, member of the two-component regulatory system YesM/YesN. This is an uncharacterized protein from Bacillus subtilis (strain 168).